A 153-amino-acid polypeptide reads, in one-letter code: UPF0260 protein Plav_0898 (153 aa).

It belongs to the UPF0260 family.

This Parvibaculum lavamentivorans (strain DS-1 / DSM 13023 / NCIMB 13966) protein is UPF0260 protein Plav_0898.